A 455-amino-acid chain; its full sequence is CDP-diacylglycerol--serine O-phosphatidyltransferase (455 aa).

PLD phosphodiesterase domains lie at 134 to 160 (VFGV…NNVY) and 356 to 383 (GDNT…NPRA).

This sequence belongs to the CDP-alcohol phosphatidyltransferase class-II family. Multimeric.

It localises to the cytoplasm. Its subcellular location is the cell inner membrane. The enzyme catalyses a CDP-1,2-diacyl-sn-glycerol + L-serine = a 1,2-diacyl-sn-glycero-3-phospho-L-serine + CMP + H(+). This Haemophilus influenzae (strain ATCC 51907 / DSM 11121 / KW20 / Rd) protein is CDP-diacylglycerol--serine O-phosphatidyltransferase (pssA).